We begin with the raw amino-acid sequence, 140 residues long: Small ribosomal subunit protein uS12 (140 aa).

A Hydroxyproline modification is found at proline 59.

This sequence belongs to the universal ribosomal protein uS12 family.

The sequence is that of Small ribosomal subunit protein uS12 (RPS23) from Encephalitozoon cuniculi (strain GB-M1) (Microsporidian parasite).